Reading from the N-terminus, the 500-residue chain is Type-2 serine--tRNA ligase (500 aa).

Position 305 (A305) interacts with L-serine. C307 contacts Zn(2+). R337 provides a ligand contact to L-serine. ATP-binding positions include R337 to E339 and R348 to V349. Residues R354–E356 and Q401 contribute to the L-serine site. E356 serves as a coordination point for Zn(2+). E430 provides a ligand contact to ATP. N433 serves as a coordination point for L-serine. C459 is a Zn(2+) binding site. ATP is bound at residue R466.

The protein belongs to the class-II aminoacyl-tRNA synthetase family. Type-2 seryl-tRNA synthetase subfamily. In terms of assembly, homodimer. Zn(2+) is required as a cofactor.

The protein localises to the cytoplasm. It catalyses the reaction tRNA(Ser) + L-serine + ATP = L-seryl-tRNA(Ser) + AMP + diphosphate + H(+). It carries out the reaction tRNA(Sec) + L-serine + ATP = L-seryl-tRNA(Sec) + AMP + diphosphate + H(+). It participates in aminoacyl-tRNA biosynthesis; selenocysteinyl-tRNA(Sec) biosynthesis; L-seryl-tRNA(Sec) from L-serine and tRNA(Sec): step 1/1. In terms of biological role, catalyzes the attachment of serine to tRNA(Ser). Is also able to aminoacylate tRNA(Sec) with serine, to form the misacylated tRNA L-seryl-tRNA(Sec), which will be further converted into selenocysteinyl-tRNA(Sec). This chain is Type-2 serine--tRNA ligase, found in Methanothrix thermoacetophila (strain DSM 6194 / JCM 14653 / NBRC 101360 / PT) (Methanosaeta thermophila).